A 567-amino-acid chain; its full sequence is Arginine--tRNA ligase (567 aa).

The 'HIGH' region motif lies at 121–131 (ANPNGPLHVGH).

The protein belongs to the class-I aminoacyl-tRNA synthetase family.

The protein localises to the cytoplasm. The catalysed reaction is tRNA(Arg) + L-arginine + ATP = L-arginyl-tRNA(Arg) + AMP + diphosphate. In Methanococcoides burtonii (strain DSM 6242 / NBRC 107633 / OCM 468 / ACE-M), this protein is Arginine--tRNA ligase.